The chain runs to 423 residues: Type II methyltransferase M.NgoBV (423 aa).

The region spanning 4–423 is the SAM-dependent MTase C5-type domain; sequence IKFIDLFSGM…AVSERLLHTL (420 aa). The active site involves cysteine 80.

This sequence belongs to the class I-like SAM-binding methyltransferase superfamily. C5-methyltransferase family.

It carries out the reaction a 2'-deoxycytidine in DNA + S-adenosyl-L-methionine = a 5-methyl-2'-deoxycytidine in DNA + S-adenosyl-L-homocysteine + H(+). Its function is as follows. A methylase, recognizes the double-stranded sequence 5'-GGNNCC-3', methylates C-5 on both strands, and protects the DNA from cleavage by the NgoBV endonuclease. In Neisseria gonorrhoeae, this protein is Type II methyltransferase M.NgoBV (ngoBVM).